Here is a 390-residue protein sequence, read N- to C-terminus: tRNA-specific 2-thiouridylase MnmA (390 aa).

Residues 36 to 43 (GMSGGVDS) and Met62 each bind ATP. The segment at 122-124 (NPD) is interaction with target base in tRNA. Cys127 acts as the Nucleophile in catalysis. Cysteines 127 and 223 form a disulfide. Gly151 serves as a coordination point for ATP. Residues 173–175 (KDQ) form an interaction with tRNA region. Residue Cys223 is the Cysteine persulfide intermediate of the active site. Residues 335 to 336 (RY) form an interaction with tRNA region.

It belongs to the MnmA/TRMU family.

It localises to the cytoplasm. The enzyme catalyses S-sulfanyl-L-cysteinyl-[protein] + uridine(34) in tRNA + AH2 + ATP = 2-thiouridine(34) in tRNA + L-cysteinyl-[protein] + A + AMP + diphosphate + H(+). Its function is as follows. Catalyzes the 2-thiolation of uridine at the wobble position (U34) of tRNA, leading to the formation of s(2)U34. The chain is tRNA-specific 2-thiouridylase MnmA from Marinomonas sp. (strain MWYL1).